Reading from the N-terminus, the 548-residue chain is Chaperonin GroEL (548 aa).

Residues 30–33 (TLGP), Lys51, 87–91 (DGTTT), Gly415, and Asp496 contribute to the ATP site.

It belongs to the chaperonin (HSP60) family. As to quaternary structure, forms a cylinder of 14 subunits composed of two heptameric rings stacked back-to-back. Interacts with the co-chaperonin GroES.

The protein localises to the cytoplasm. The enzyme catalyses ATP + H2O + a folded polypeptide = ADP + phosphate + an unfolded polypeptide.. Functionally, together with its co-chaperonin GroES, plays an essential role in assisting protein folding. The GroEL-GroES system forms a nano-cage that allows encapsulation of the non-native substrate proteins and provides a physical environment optimized to promote and accelerate protein folding. This chain is Chaperonin GroEL, found in Haemophilus influenzae (strain ATCC 51907 / DSM 11121 / KW20 / Rd).